Here is a 540-residue protein sequence, read N- to C-terminus: Protein PALS2 (540 aa).

2 L27 domains span residues 1-48 (MQQV…EDSK) and 49-107 (LEAV…YDSP). Positions 130-209 (ILGIHKRAGE…SVTLKILPSY (80 aa)) constitute a PDZ domain. One can recognise an SH3 domain in the interval 215-284 (PQQVFVKCHF…PSQFLEEKRK (70 aa)). Positions 338–525 (RKTLVLIGAQ…AFEKLQTAIE (188 aa)) constitute a Guanylate kinase-like domain. Tyr500 is modified (phosphotyrosine).

It belongs to the MAGUK family. In terms of assembly, interacts with CADM1. Interacts with the LIN7 proteins. In terms of tissue distribution, abundant in testis, brain, and kidney with lower levels detectable in other tissues.

The protein localises to the membrane. This is Protein PALS2 from Homo sapiens (Human).